The following is a 274-amino-acid chain: Penicillin-insensitive murein endopeptidase (274 aa).

Residues 1–19 (MKKTAIALLAWFVSSASLA) form the signal peptide. Disulfide bonds link Cys44-Cys265, Cys187-Cys235, and Cys216-Cys223. 6 residues coordinate Zn(2+): His110, His113, Asp120, Asp147, His150, and His211. A disordered region spans residues 225–274 (DQPLPPPGDGCGAELQSWFEPPKPGTTKPEKKTPPPLPPSCQALLDEHVL).

Belongs to the peptidase M74 family. As to quaternary structure, dimer. Zn(2+) is required as a cofactor.

It is found in the periplasm. Functionally, murein endopeptidase that cleaves the D-alanyl-meso-2,6-diamino-pimelyl amide bond that connects peptidoglycan strands. Likely plays a role in the removal of murein from the sacculus. This Salmonella arizonae (strain ATCC BAA-731 / CDC346-86 / RSK2980) protein is Penicillin-insensitive murein endopeptidase.